Consider the following 537-residue polypeptide: 4-coumarate--CoA ligase (537 aa).

Residues Ser189, Ser190, Gly191, Thr192, Thr193, and Lys197 each contribute to the ATP site. (E)-4-coumaroyl-AMP is bound by residues Tyr239 and Ser243. Residue Lys260 coordinates CoA. The SBD1 stretch occupies residues 262–331; it reads NLTTCLELIQ…ERFPKAIFGQ (70 aa). The (E)-4-coumaroyl-AMP site is built by Ala309, Gln331, Gly332, Thr336, and Met344. ATP contacts are provided by Gln331, Gly332, and Thr336. Positions 332–399 are SBD2; the sequence is GYGMTEAGPV…IRGPEIMKGY (68 aa). ATP is bound by residues Asp420 and Arg435. Positions 437 and 441 each coordinate (E)-4-coumaroyl-AMP. CoA-binding residues include Lys443 and Gly444. ATP is bound at residue Lys524.

The protein belongs to the ATP-dependent AMP-binding enzyme family. It depends on Mg(2+) as a cofactor.

It catalyses the reaction (E)-4-coumarate + ATP + CoA = (E)-4-coumaroyl-CoA + AMP + diphosphate. The catalysed reaction is (E)-4-coumarate + ATP + H(+) = (E)-4-coumaroyl-AMP + diphosphate. The enzyme catalyses (E)-4-coumaroyl-AMP + CoA = (E)-4-coumaroyl-CoA + AMP + H(+). It functions in the pathway phytoalexin biosynthesis; 3,4',5-trihydroxystilbene biosynthesis; 3,4',5-trihydroxystilbene from trans-4-coumarate: step 1/2. Its function is as follows. Carboxylate--CoA ligase that may use 4-coumarate as substrate. Follows a two-step reaction mechanism, wherein the carboxylate substrate first undergoes adenylation by ATP, followed by a thioesterification in the presence of CoA to yield the final CoA thioester. This Pinus taeda (Loblolly pine) protein is 4-coumarate--CoA ligase (4CL).